Reading from the N-terminus, the 371-residue chain is tRNA-specific 2-thiouridylase MnmA (371 aa).

ATP-binding positions include 13–20 and methionine 39; that span reads GMSGGVDS. Positions 99–101 are interaction with target base in tRNA; it reads NPD. Residue cysteine 104 is the Nucleophile of the active site. A disulfide bridge connects residues cysteine 104 and cysteine 200. Glycine 128 lines the ATP pocket. Residues 150 to 152 form an interaction with tRNA region; sequence KDQ. Residue cysteine 200 is the Cysteine persulfide intermediate of the active site. The tract at residues 308 to 309 is interaction with tRNA; sequence RY.

Belongs to the MnmA/TRMU family.

Its subcellular location is the cytoplasm. It carries out the reaction S-sulfanyl-L-cysteinyl-[protein] + uridine(34) in tRNA + AH2 + ATP = 2-thiouridine(34) in tRNA + L-cysteinyl-[protein] + A + AMP + diphosphate + H(+). Functionally, catalyzes the 2-thiolation of uridine at the wobble position (U34) of tRNA, leading to the formation of s(2)U34. The polypeptide is tRNA-specific 2-thiouridylase MnmA (Listeria innocua serovar 6a (strain ATCC BAA-680 / CLIP 11262)).